Reading from the N-terminus, the 406-residue chain is Elongation factor Tu-B (406 aa).

Residues 10–215 (KPHVNVGTIG…AIDEYIPTPV (206 aa)) form the tr-type G domain. Residues 19 to 26 (GHVDHGKT) form a G1 region. 19–26 (GHVDHGKT) contacts GTP. Thr-26 contributes to the Mg(2+) binding site. The tract at residues 61–65 (GITIN) is G2. Positions 82 to 85 (DCPG) are G3. Residues 82 to 86 (DCPGH) and 137 to 140 (NKVD) each bind GTP. Residues 137–140 (NKVD) form a G4 region. Positions 175-177 (SAL) are G5. Phosphothreonine is present on Thr-395.

Belongs to the TRAFAC class translation factor GTPase superfamily. Classic translation factor GTPase family. EF-Tu/EF-1A subfamily. Monomer. In terms of processing, phosphorylated on a threonine.

The protein localises to the cytoplasm. It carries out the reaction GTP + H2O = GDP + phosphate + H(+). Its function is as follows. GTP hydrolase that promotes the GTP-dependent binding of aminoacyl-tRNA to the A-site of ribosomes during protein biosynthesis. In terms of biological role, protects glycyl-tRNA(Gly) from hydrolysis by E.coli D-aminoacyl-tRNA deacylase (dtd). This is Elongation factor Tu-B from Thermus thermophilus (strain ATCC 27634 / DSM 579 / HB8).